An 80-amino-acid polypeptide reads, in one-letter code: Cytochrome c oxidase subunit 7B, mitochondrial (80 aa).

A mitochondrion-targeting transit peptide spans 1-24; that stretch reads MLPLAKNALSRLQVRSIQQVVARQ. Topologically, residues 25–39 are mitochondrial matrix; the sequence is SHQKRAPSFHDKYGN. Residues 40–60 traverse the membrane as a helical segment; the sequence is AILAGGAIFCVSTWTYTATQI. Residues 61–80 lie on the Mitochondrial intermembrane side of the membrane; it reads GIEWNMSPVGRVTPKEWRDQ.

It belongs to the cytochrome c oxidase VIIb family. As to quaternary structure, component of the cytochrome c oxidase (complex IV, CIV), a multisubunit enzyme composed of 14 subunits. The complex is composed of a catalytic core of 3 subunits MT-CO1, MT-CO2 and MT-CO3, encoded in the mitochondrial DNA, and 11 supernumerary subunits COX4I, COX5A, COX5B, COX6A, COX6B, COX6C, COX7A, COX7B, COX7C, COX8 and NDUFA4, which are encoded in the nuclear genome. The complex exists as a monomer or a dimer and forms supercomplexes (SCs) in the inner mitochondrial membrane with NADH-ubiquinone oxidoreductase (complex I, CI) and ubiquinol-cytochrome c oxidoreductase (cytochrome b-c1 complex, complex III, CIII), resulting in different assemblies (supercomplex SCI(1)III(2)IV(1) and megacomplex MCI(2)III(2)IV(2)).

Its subcellular location is the mitochondrion inner membrane. The protein operates within energy metabolism; oxidative phosphorylation. Its function is as follows. Component of the cytochrome c oxidase, the last enzyme in the mitochondrial electron transport chain which drives oxidative phosphorylation. The respiratory chain contains 3 multisubunit complexes succinate dehydrogenase (complex II, CII), ubiquinol-cytochrome c oxidoreductase (cytochrome b-c1 complex, complex III, CIII) and cytochrome c oxidase (complex IV, CIV), that cooperate to transfer electrons derived from NADH and succinate to molecular oxygen, creating an electrochemical gradient over the inner membrane that drives transmembrane transport and the ATP synthase. Cytochrome c oxidase is the component of the respiratory chain that catalyzes the reduction of oxygen to water. Electrons originating from reduced cytochrome c in the intermembrane space (IMS) are transferred via the dinuclear copper A center (CU(A)) of subunit 2 and heme A of subunit 1 to the active site in subunit 1, a binuclear center (BNC) formed by heme A3 and copper B (CU(B)). The BNC reduces molecular oxygen to 2 water molecules using 4 electrons from cytochrome c in the IMS and 4 protons from the mitochondrial matrix. Plays a role in proper central nervous system (CNS) development in vertebrates. The protein is Cytochrome c oxidase subunit 7B, mitochondrial (Cox7b) of Mus musculus (Mouse).